The following is a 615-amino-acid chain: MKALRLSASALFCLLLINGLGAAPPGRPEAQPPPLSSEHKEPVAGDAVPGPKDGSAPEVRGARNSEPQDEGELFQGVDPRALAAVLLQALDRPASPPAPSGSQQGPEEEAAEALLTETVRSQTHSLPAPESPEPAAPPRPQTPENGPEASDPSEELEALASLLQELRDFSPSSAKRQQETAAAETETRTHTLTRVNLESPGPERVWRASWGEFQARVPERAPLPPPAPSQFQARMPDSGPLPETHKFGEGVSSPKTHLGEALAPLSKAYQGVAAPFPKARRPESALLGGSEAGERLLQQGLAQVEAGRRQAEATRQAAAQEERLADLASDLLLQYLLQGGARQRGLGGRGLQEAAEERESAREEEEAEQERRGGEERVGEEDEEAAEAEAEAEEAERARQNALLFAEEEDGEAGAEDKRSQEETPGHRRKEAEGTEEGGEEEDDEEMDPQTIDSLIELSTKLHLPADDVVSIIEEVEEKRKRKKNAPPEPVPPPRAAPAPTHVRSPQPPPPAPAPARDELPDWNEVLPPWDREEDEVYPPGPYHPFPNYIRPRTLQPPSALRRRHYHHALPPSRHYPGREAQARRAQEEAEAEERRLQEQEELENYIEHVLLRRP.

Positions 1 to 22 (MKALRLSASALFCLLLINGLGA) are cleaved as a signal peptide. Disordered stretches follow at residues 22–201 (AAPP…ESPG) and 218–257 (PERA…PKTH). Composition is skewed to pro residues over residues 25 to 35 (PGRPEAQPPPL) and 129 to 141 (PESP…PRPQ). Over residues 179-194 (ETAAAETETRTHTLTR) the composition is skewed to low complexity. Pyrrolidone carboxylic acid is present on Gln-310. Positions 342–600 (RQRGLGGRGL…EAEERRLQEQ (259 aa)) are disordered. Residues 378–394 (VGEEDEEAAEAEAEAEE) are compositionally biased toward acidic residues. Residues 415 to 433 (AEDKRSQEETPGHRRKEAE) are compositionally biased toward basic and acidic residues. At Ser-420 the chain carries Phosphoserine; by FAM20C. Residue Thr-424 is modified to Phosphothreonine; by FAM20C. The span at 434 to 448 (GTEEGGEEEDDEEMD) shows a compositional bias: acidic residues. Pro residues predominate over residues 487–497 (PPEPVPPPRAA). Pro-577 is modified (proline amide). Residues 577–599 (PGREAQARRAQEEAEAEERRLQE) are compositionally biased toward basic and acidic residues.

In terms of assembly, interacts with HSPA8 on cell membrane. Interacts with C3AR1. Interacts with C1QBP. Multiple peptides are derived from VGF, with activities in synaptic plasticity, antidepression, penile erection, autonomic activation, and increases in energy expenditure. Central and peripheral nervous systems, synthesized exclusively in neuronal and neuroendocrine cells.

The protein resides in the secreted. It localises to the cytoplasmic vesicle. The protein localises to the secretory vesicle. In terms of biological role, secreted polyprotein that is packaged and proteolytically processed by prohormone convertases PCSK1 and PCSK2 in a cell-type-specific manner. VGF and peptides derived from its processing play many roles in neurogenesis and neuroplasticity associated with learning, memory, depression and chronic pain. Its function is as follows. Plays a role in the control of body fluid homeostasis by regulating vasopressin release. Suppresses presynaptic glutamatergic neurons connected to vasopressin neurons. Functionally, plays a role in the control of body fluid homeostasis by regulating vasopressin release. Activates GABAergic interneurons which are inhibitory neurons of the nervous system and thereby suppresses presynaptic glutamatergic neurons. Also stimulates feeding behavior in an orexin-dependent manner in the hypothalamus. Functions as a positive regulator for the activation of orexin neurons resulting in elevated gastric acid secretion and gastric emptying. Secreted multifunctional neuropeptide that binds to different cell receptors and thereby plays multiple physiological roles including modulation of energy expenditure, pain, response to stress, gastric regulation, glucose homeostasis as well as lipolysis. Activates the G-protein-coupled receptor C3AR1 via a folding-upon-binding mechanism leading to enhanced lipolysis in adipocytes. Interacts with C1QBP receptor in macrophages and microglia causing increased levels of intracellular calcium and hypersensitivity. In terms of biological role, plays a role in the regulation of memory formation and depression-related behaviors potentially by influencing synaptic plasticity and neurogenesis. Induces acute and transient activation of the NTRK2/TRKB receptor and subsequent CREB phosphorylation. Also induces insulin secretion in insulinoma cells by increasing intracellular calcium mobilization. Its function is as follows. Has bactericidal activity against M.luteus, and antifungal activity against P. Pastoris. In Homo sapiens (Human), this protein is Neurosecretory protein VGF (VGF).